We begin with the raw amino-acid sequence, 2290 residues long: Autophagy-related protein 2 (2290 aa).

The region spanning Trp10 to Phe99 is the Chorein N-terminal domain. Residues Asp829–Val1549 are required for epg-6 binding. Disordered regions lie at residues Ile1678 to Leu1727, Asp1805 to Gly1851, Ser1898 to Asn1919, and Glu1967 to Lys2003. Low complexity predominate over residues Lys1681–Ser1692. A compositionally biased stretch (pro residues) spans Arg1714–Pro1723. Over residues Gln1810–Gln1830 the composition is skewed to low complexity. A coiled-coil region spans residues Leu1972–Arg2011. Acidic residues predominate over residues Glu1988–Glu1999.

This sequence belongs to the ATG2 family. In terms of assembly, interacts with epg-6; the interaction is direct.

It is found in the preautophagosomal structure membrane. The protein localises to the lipid droplet. The protein resides in the endoplasmic reticulum membrane. Its subcellular location is the cytoplasm. The catalysed reaction is a 1,2-diacyl-sn-glycero-3-phospho-L-serine(in) = a 1,2-diacyl-sn-glycero-3-phospho-L-serine(out). It carries out the reaction a 1,2-diacyl-sn-glycero-3-phosphoethanolamine(in) = a 1,2-diacyl-sn-glycero-3-phosphoethanolamine(out). Its function is as follows. Lipid transfer protein involved in autophagosome assembly and in the distribution of atg-9 and atg-13 during the autophagy-mediated degradation of protein aggregates. Tethers the edge of the isolation membrane (IM) to the endoplasmic reticulum (ER) and mediates direct lipid transfer from ER to IM for IM expansion. Binds to the ER exit site (ERES), which is the membrane source for autophagosome formation, and extracts phospholipids from the membrane source to the IM for membrane expansion. Involved in autophagy-mediated degradation of ribosomal RNA and ribosomal proteins in lysosomes, which is essential for maintaining nucleotide homeostasis. The sequence is that of Autophagy-related protein 2 from Caenorhabditis elegans.